The following is an 82-amino-acid chain: Small ribosomal subunit protein bS16 (82 aa).

This sequence belongs to the bacterial ribosomal protein bS16 family.

The sequence is that of Small ribosomal subunit protein bS16 from Serratia proteamaculans (strain 568).